A 322-amino-acid polypeptide reads, in one-letter code: Transaldolase (322 aa).

The active-site Schiff-base intermediate with substrate is Lys136.

It belongs to the transaldolase family. Type 1 subfamily. Homodimer.

The protein resides in the cytoplasm. The catalysed reaction is D-sedoheptulose 7-phosphate + D-glyceraldehyde 3-phosphate = D-erythrose 4-phosphate + beta-D-fructose 6-phosphate. Its pathway is carbohydrate degradation; pentose phosphate pathway; D-glyceraldehyde 3-phosphate and beta-D-fructose 6-phosphate from D-ribose 5-phosphate and D-xylulose 5-phosphate (non-oxidative stage): step 2/3. In terms of biological role, transaldolase is important for the balance of metabolites in the pentose-phosphate pathway. The polypeptide is Transaldolase (Xanthomonas campestris pv. campestris (strain B100)).